The following is a 475-amino-acid chain: Sensor histidine kinase QseE (475 aa).

Over Met-1 to Gln-13 the chain is Cytoplasmic. The chain crosses the membrane as a helical span at residues Leu-14–Trp-34. Over Gln-35–Gln-173 the chain is Periplasmic. The chain crosses the membrane as a helical span at residues Tyr-174 to Thr-194. Topologically, residues Arg-195–Lys-475 are cytoplasmic. Residues His-256 to Lys-472 enclose the Histidine kinase domain. Phosphohistidine; by autocatalysis is present on His-259.

In terms of processing, autophosphorylated.

It is found in the cell inner membrane. It catalyses the reaction ATP + protein L-histidine = ADP + protein N-phospho-L-histidine.. Member of the two-component regulatory system QseF/QseE involved in the regulation of virulence and metabolism in EHEC. Required for pedestal formation in host epithelial cells during infection. Autophosphorylates in response to epinephrine, sulfate or phosphate and then probably transfers its phosphate group to QseF. The polypeptide is Sensor histidine kinase QseE (qseE) (Escherichia coli O157:H7).